We begin with the raw amino-acid sequence, 414 residues long: Eukaryotic initiation factor 4A-3 (414 aa).

The residue at position 2 (A2) is an N-acetylalanine. The Q motif motif lies at D41–Q69. The 171-residue stretch at I72–I242 folds into the Helicase ATP-binding domain. A85–T92 provides a ligand contact to ATP. S106 carries the post-translational modification Phosphoserine. T147 carries the post-translational modification Phosphothreonine. A DEAD box motif is present at residues D190–D193. Residues G253–L414 form the Helicase C-terminal domain.

The protein belongs to the DEAD box helicase family. eIF4A subfamily. As to quaternary structure, eIF4F is a multi-subunit complex, the composition of which varies with external and internal environmental conditions. It is composed of at least EIF4A, EIF4E and EIF4G.

It is found in the cytoplasm. It carries out the reaction ATP + H2O = ADP + phosphate + H(+). Functionally, ATP-dependent RNA helicase which is a subunit of the eIF4F complex involved in cap recognition and is required for mRNA binding to ribosome. In the current model of translation initiation, eIF4A unwinds RNA secondary structures in the 5'-UTR of mRNAs which is necessary to allow efficient binding of the small ribosomal subunit, and subsequent scanning for the initiator codon. The chain is Eukaryotic initiation factor 4A-3 (TIF4A-3) from Arabidopsis thaliana (Mouse-ear cress).